The following is a 126-amino-acid chain: Holo-[acyl-carrier-protein] synthase (126 aa).

Residues aspartate 9 and glutamate 57 each contribute to the Mg(2+) site.

Belongs to the P-Pant transferase superfamily. AcpS family. Mg(2+) serves as cofactor.

The protein resides in the cytoplasm. It carries out the reaction apo-[ACP] + CoA = holo-[ACP] + adenosine 3',5'-bisphosphate + H(+). Transfers the 4'-phosphopantetheine moiety from coenzyme A to a Ser of acyl-carrier-protein. This Alteromonas mediterranea (strain DSM 17117 / CIP 110805 / LMG 28347 / Deep ecotype) protein is Holo-[acyl-carrier-protein] synthase.